A 269-amino-acid polypeptide reads, in one-letter code: DNA-binding protein RFXANK (269 aa).

The interval 1 to 36 is disordered; sequence MEPTQVAENLVPNQQPPVPDLEDPEDTRDESPENSD. ANK repeat units follow at residues 88 to 127, 132 to 161, 165 to 194, 198 to 227, and 231 to 260; these read LDSL…NLIN, RGFT…DPHI, ERES…DINI, NGGT…DLTT, and SGYT…RLFQ.

In terms of assembly, forms homodimers. The RFX heterotetrameric complex consists of 2 molecules of RFX5 and one each of RFXAP and RFX-B/RFXANK; with each subunit representing a separate complementation group. Interacts (via ankyrin repeats) with RFX5 (via PxLPxI/L motif); the interaction is direct. RFX forms cooperative DNA binding complexes with X2BP and CBF/NF-Y. RFX associates with CIITA to form an active transcriptional complex. Interacts with RAF1. Interacts with RFX7. Phosphorylated by RAF1. In terms of tissue distribution, expressed primarily in thymus, lung and testis.

The protein resides in the cytoplasm. Its subcellular location is the nucleus. In terms of biological role, activates transcription from class II MHC promoters. Activation requires the activity of the MHC class II transactivator/CIITA. May regulate other genes in the cell. RFX binds the X1 box of MHC-II promoters. May also potentiate the activation of RAF1. The sequence is that of DNA-binding protein RFXANK (Rfxank) from Mus musculus (Mouse).